Consider the following 49-residue polypeptide: Large ribosomal subunit protein bL34 (49 aa).

The protein belongs to the bacterial ribosomal protein bL34 family.

The protein is Large ribosomal subunit protein bL34 of Sorangium cellulosum (strain So ce56) (Polyangium cellulosum (strain So ce56)).